A 281-amino-acid chain; its full sequence is Insulin-like growth factor-binding protein 2 (281 aa).

The signal sequence occupies residues M1–S21. In terms of domain architecture, IGFBP N-terminal spans V23–R106. Cystine bridges form between C27–C56, C30–C58, C38–C59, C47–C62, C70–C83, and C77–C103. Disordered stretches follow at residues R107 to D127 and P139 to R180. The segment covering V156 to K176 has biased composition (basic and acidic residues). The Thyroglobulin type-1 domain occupies R180–C262. 3 disulfides stabilise this stretch: C183/C217, C228/C239, and C241/C262. A Cell attachment site motif is present at residues R257 to D259.

Interacts with igf1 and igf2.

The protein localises to the secreted. Its function is as follows. IGF-binding proteins prolong the half-life of the IGFs and have been shown to either inhibit or stimulate the growth promoting effects of the IGFs on cell culture. They alter the interaction of IGFs with their cell surface receptors. In Xenopus laevis (African clawed frog), this protein is Insulin-like growth factor-binding protein 2 (igfbp2).